The sequence spans 331 residues: D-alanine--D-alanine ligase (331 aa).

The 207-residue stretch at 121 to 327 folds into the ATP-grasp domain; sequence KLWYDALGIP…FSQFLENCVR (207 aa). 151-206 is a binding site for ATP; sequence AFESWGKVFVKAARQGSSVGCYQVNQVEELSEAINKAFTFSDQVLIEKSVVPRELE. Mg(2+) contacts are provided by Asp-281, Glu-294, and Asn-296.

The protein belongs to the D-alanine--D-alanine ligase family. It depends on Mg(2+) as a cofactor. Mn(2+) is required as a cofactor.

Its subcellular location is the cytoplasm. It carries out the reaction 2 D-alanine + ATP = D-alanyl-D-alanine + ADP + phosphate + H(+). It functions in the pathway cell wall biogenesis; peptidoglycan biosynthesis. Functionally, cell wall formation. The polypeptide is D-alanine--D-alanine ligase (Vibrio atlanticus (strain LGP32) (Vibrio splendidus (strain Mel32))).